We begin with the raw amino-acid sequence, 206 residues long: Erythropoietin (206 aa).

The first 40 residues, 1–40 (MCEPAPPKPTQSAWHSFPECPALLLLLSLLLLPLGLPVLG), serve as a signal peptide directing secretion. Cystine bridges form between C47-C201 and C69-C73. N-linked (GlcNAc...) asparagine glycosylation occurs at N64. Residues N78 and N123 are each glycosylated (N-linked (GlcNAc...) asparagine).

This sequence belongs to the EPO/TPO family. As to expression, produced by kidney or liver of adult mammals and by liver of fetal or neonatal mammals.

The protein resides in the secreted. In terms of biological role, hormone involved in the regulation of erythrocyte proliferation and differentiation and the maintenance of a physiological level of circulating erythrocyte mass. Binds to EPOR leading to EPOR dimerization and JAK2 activation thereby activating specific downstream effectors, including STAT1 and STAT3. This Canis lupus familiaris (Dog) protein is Erythropoietin (EPO).